A 243-amino-acid chain; its full sequence is 3-deoxy-manno-octulosonate cytidylyltransferase (243 aa).

Belongs to the KdsB family.

The protein resides in the cytoplasm. The catalysed reaction is 3-deoxy-alpha-D-manno-oct-2-ulosonate + CTP = CMP-3-deoxy-beta-D-manno-octulosonate + diphosphate. Its pathway is nucleotide-sugar biosynthesis; CMP-3-deoxy-D-manno-octulosonate biosynthesis; CMP-3-deoxy-D-manno-octulosonate from 3-deoxy-D-manno-octulosonate and CTP: step 1/1. It functions in the pathway bacterial outer membrane biogenesis; lipopolysaccharide biosynthesis. In terms of biological role, activates KDO (a required 8-carbon sugar) for incorporation into bacterial lipopolysaccharide in Gram-negative bacteria. The sequence is that of 3-deoxy-manno-octulosonate cytidylyltransferase from Bartonella henselae (strain ATCC 49882 / DSM 28221 / CCUG 30454 / Houston 1) (Rochalimaea henselae).